A 385-amino-acid polypeptide reads, in one-letter code: Probable tRNA sulfurtransferase (385 aa).

Residues 57 to 160 (DGVIERVKKV…RGNAYVFTDK (104 aa)) enclose the THUMP domain. ATP-binding positions include 180–181 (ML), 205–206 (YY), Arg262, Gly284, and Gln293.

It belongs to the ThiI family.

It localises to the cytoplasm. The catalysed reaction is [ThiI sulfur-carrier protein]-S-sulfanyl-L-cysteine + a uridine in tRNA + 2 reduced [2Fe-2S]-[ferredoxin] + ATP + H(+) = [ThiI sulfur-carrier protein]-L-cysteine + a 4-thiouridine in tRNA + 2 oxidized [2Fe-2S]-[ferredoxin] + AMP + diphosphate. The enzyme catalyses [ThiS sulfur-carrier protein]-C-terminal Gly-Gly-AMP + S-sulfanyl-L-cysteinyl-[cysteine desulfurase] + AH2 = [ThiS sulfur-carrier protein]-C-terminal-Gly-aminoethanethioate + L-cysteinyl-[cysteine desulfurase] + A + AMP + 2 H(+). It participates in cofactor biosynthesis; thiamine diphosphate biosynthesis. Its function is as follows. Catalyzes the ATP-dependent transfer of a sulfur to tRNA to produce 4-thiouridine in position 8 of tRNAs, which functions as a near-UV photosensor. Also catalyzes the transfer of sulfur to the sulfur carrier protein ThiS, forming ThiS-thiocarboxylate. This is a step in the synthesis of thiazole, in the thiamine biosynthesis pathway. The sulfur is donated as persulfide by IscS. This is Probable tRNA sulfurtransferase from Clostridium perfringens (strain ATCC 13124 / DSM 756 / JCM 1290 / NCIMB 6125 / NCTC 8237 / Type A).